The primary structure comprises 117 residues: Large ribosomal subunit protein uL18 (117 aa).

Belongs to the universal ribosomal protein uL18 family. In terms of assembly, part of the 50S ribosomal subunit; part of the 5S rRNA/L5/L18/L25 subcomplex. Contacts the 5S and 23S rRNAs.

In terms of biological role, this is one of the proteins that bind and probably mediate the attachment of the 5S RNA into the large ribosomal subunit, where it forms part of the central protuberance. The chain is Large ribosomal subunit protein uL18 from Pectobacterium atrosepticum (strain SCRI 1043 / ATCC BAA-672) (Erwinia carotovora subsp. atroseptica).